The primary structure comprises 469 residues: Histone acetyltransferase ESA1 (469 aa).

Residues 1–26 (MALAEADLPNGKTNGKASGSEETPAP) are disordered. Over residues 11-21 (GKTNGKASGSE) the composition is skewed to polar residues. Positions 39 to 92 (LRVGCKVHVEKDGEDRVAEILSVQMRRGNLEFYVHYVEFNKRLDERIAATRVDL) constitute a Tudor-knot domain. A disordered region spans residues 98-163 (WPEPEKPKKP…GTTQDPDNFN (66 aa)). Over residues 118 to 127 (EKKKNPSKKQ) the composition is skewed to basic residues. Composition is skewed to polar residues over residues 130–139 (TDSAATTPGA) and 150–160 (LQVNGTTQDPD). Residues 185–457 (ARVRNLQRIV…VNSELLKWKP (273 aa)) form the MYST-type HAT domain. Residues 218-243 (IYICDFTLCYFGSKKQFERFRSKSTL) form a C2HC MYST-type; degenerate zinc finger. An N6-acetyllysine; by autocatalysis modification is found at K285. Acetyl-CoA-binding positions include 326–330 (ACILT) and 335–341 (QRHGYGR). E361 serves as the catalytic Proton donor/acceptor. S365 lines the acetyl-CoA pocket.

The protein belongs to the MYST (SAS/MOZ) family. Component of the NuA4 histone acetyltransferase complex. Autoacetylation at Lys-285 is required for proper function.

It is found in the nucleus. The protein localises to the chromosome. The catalysed reaction is L-lysyl-[histone] + acetyl-CoA = N(6)-acetyl-L-lysyl-[histone] + CoA + H(+). It carries out the reaction L-lysyl-[protein] + acetyl-CoA = N(6)-acetyl-L-lysyl-[protein] + CoA + H(+). The enzyme catalyses 2-hydroxyisobutanoyl-CoA + L-lysyl-[protein] = N(6)-(2-hydroxyisobutanoyl)-L-lysyl-[protein] + CoA + H(+). It catalyses the reaction (2E)-butenoyl-CoA + L-lysyl-[protein] = N(6)-(2E)-butenoyl-L-lysyl-[protein] + CoA + H(+). In terms of biological role, catalytic component of the NuA4 histone acetyltransferase (HAT) complex which is involved in epigenetic transcriptional activation of selected genes principally by acetylation of nucleosomal histones H4, H3, H2B, H2A and H2A variant H2A.Z. Acetylates histone H4 to form H4K5ac, H4K8ac, H4K12ac and H4K16ac, histone H3 to form H3K14ac, and histone H2A to form H2AK4ac and H2AK7ac. The NuA4 complex is involved in the DNA damage response and is required for chromosome segregation. The NuA4 complex plays a direct role in repair of DNA double-strand breaks (DSBs) through homologous recombination. Recruitment to promoters depends on H3K4me. Also acetylates non-histone proteins. In addition to protein acetyltransferase, can use different acyl-CoA substrates, such as 2-hydroxyisobutanoyl-CoA (2-hydroxyisobutyryl-CoA) or (2E)-butenoyl-CoA (crotonyl-CoA), and is able to mediate protein 2-hydroxyisobutyrylation and crotonylation, respectively. This Yarrowia lipolytica (strain CLIB 122 / E 150) (Yeast) protein is Histone acetyltransferase ESA1 (ESA1).